The chain runs to 426 residues: Serine--tRNA ligase (426 aa).

235–237 (TAE) contributes to the L-serine binding site. ATP-binding positions include 266-268 (RRE) and V282. E289 provides a ligand contact to L-serine. 353–356 (EASS) contacts ATP. S389 is an L-serine binding site.

The protein belongs to the class-II aminoacyl-tRNA synthetase family. Type-1 seryl-tRNA synthetase subfamily. As to quaternary structure, homodimer. The tRNA molecule binds across the dimer.

The protein resides in the cytoplasm. It catalyses the reaction tRNA(Ser) + L-serine + ATP = L-seryl-tRNA(Ser) + AMP + diphosphate + H(+). The enzyme catalyses tRNA(Sec) + L-serine + ATP = L-seryl-tRNA(Sec) + AMP + diphosphate + H(+). It functions in the pathway aminoacyl-tRNA biosynthesis; selenocysteinyl-tRNA(Sec) biosynthesis; L-seryl-tRNA(Sec) from L-serine and tRNA(Sec): step 1/1. Its function is as follows. Catalyzes the attachment of serine to tRNA(Ser). Is also able to aminoacylate tRNA(Sec) with serine, to form the misacylated tRNA L-seryl-tRNA(Sec), which will be further converted into selenocysteinyl-tRNA(Sec). The sequence is that of Serine--tRNA ligase from Chlorobium chlorochromatii (strain CaD3).